A 199-amino-acid chain; its full sequence is NADH-quinone oxidoreductase subunit C (199 aa).

This sequence belongs to the complex I 30 kDa subunit family. As to quaternary structure, NDH-1 is composed of 14 different subunits. Subunits NuoB, C, D, E, F, and G constitute the peripheral sector of the complex.

It localises to the cell inner membrane. The enzyme catalyses a quinone + NADH + 5 H(+)(in) = a quinol + NAD(+) + 4 H(+)(out). In terms of biological role, NDH-1 shuttles electrons from NADH, via FMN and iron-sulfur (Fe-S) centers, to quinones in the respiratory chain. The immediate electron acceptor for the enzyme in this species is believed to be ubiquinone. Couples the redox reaction to proton translocation (for every two electrons transferred, four hydrogen ions are translocated across the cytoplasmic membrane), and thus conserves the redox energy in a proton gradient. The chain is NADH-quinone oxidoreductase subunit C from Cupriavidus pinatubonensis (strain JMP 134 / LMG 1197) (Cupriavidus necator (strain JMP 134)).